The primary structure comprises 243 residues: NADH-ubiquinone oxidoreductase chain 6 (243 aa).

5 consecutive transmembrane segments (helical) span residues 16–36 (ISSVLDIISILAIFCGISVIV), 41–61 (IISVLFLIGLFASVSSYLILL), 69–89 (AYLIVYIGAISILFLFILMLI), 104–124 (IPLTIILGISLSYSLFQLLPY), and 201–221 (IWLFLASFILLLAMVGSIVII).

This sequence belongs to the complex I subunit 6 family.

The protein resides in the mitochondrion membrane. The enzyme catalyses a ubiquinone + NADH + 5 H(+)(in) = a ubiquinol + NAD(+) + 4 H(+)(out). Core subunit of the mitochondrial membrane respiratory chain NADH dehydrogenase (Complex I) that is believed to belong to the minimal assembly required for catalysis. Complex I functions in the transfer of electrons from NADH to the respiratory chain. The immediate electron acceptor for the enzyme is believed to be ubiquinone. This Neurospora crassa (strain ATCC 24698 / 74-OR23-1A / CBS 708.71 / DSM 1257 / FGSC 987) protein is NADH-ubiquinone oxidoreductase chain 6 (ndh-6).